The chain runs to 349 residues: Protein RAE1 (349 aa).

Positions 1 to 21 (MATFGAPATANSNPNKSYEVT) are disordered. Ala-2 carries the N-acetylalanine modification. Over residues 9-21 (TANSNPNKSYEVT) the composition is skewed to polar residues. WD repeat units lie at residues 23 to 62 (SPADSISSLSFSPRADILVATSWDNQVRCWEISRSGASLA), 70 to 109 (SHDQPVLCSAWKDDGTTVFSGGCDKQAKMWPLLSGGQPVT), 112 to 151 (MHEGPIAAMAWIPGMNLLATGSWDKTLKYWDTRQQNPVHT), 153 to 190 (QLPDKCYTLSVKHPLMVVGTADRNLIVFNLQNPQTEFK), and 244 to 283 (NDIYSVNSLNFHPVHGTFATAGSDGAFNFWDKDSKQRLKA). The DWD box signature appears at 128–144 (LLATGSWDKTLKYWDTR).

Belongs to the WD repeat rae1 family. Part of the nuclear pore complex (NPC). The NPC has an eight-fold symmetrical structure comprising a central transport channel and two rings, the cytoplasmic and nuclear rings, to which eight filaments are attached. The cytoplasmic filaments have loose ends, while the nuclear filaments are joined in a distal ring, forming a nuclear basket. NPCs are highly dynamic in configuration and composition, and can be devided in 3 subcomplexes, the NUP62 subcomplex, the NUP107-160 subcomplex and the NUP93 subcomplex, containing approximately 30 different nucleoporin proteins. Interacts with DDB1A.

Its subcellular location is the nucleus envelope. The protein localises to the nucleus. It is found in the nuclear pore complex. The chain is Protein RAE1 from Arabidopsis thaliana (Mouse-ear cress).